Consider the following 217-residue polypeptide: Protein-L-isoaspartate O-methyltransferase 2 (217 aa).

The active site involves S64.

The protein belongs to the methyltransferase superfamily. L-isoaspartyl/D-aspartyl protein methyltransferase family.

The protein localises to the cytoplasm. The catalysed reaction is [protein]-L-isoaspartate + S-adenosyl-L-methionine = [protein]-L-isoaspartate alpha-methyl ester + S-adenosyl-L-homocysteine. In terms of biological role, catalyzes the methyl esterification of L-isoaspartyl residues in peptides and proteins that result from spontaneous decomposition of normal L-aspartyl and L-asparaginyl residues. It plays a role in the repair and/or degradation of damaged proteins. The protein is Protein-L-isoaspartate O-methyltransferase 2 of Rhodopseudomonas palustris (strain HaA2).